A 129-amino-acid chain; its full sequence is Small ribosomal subunit protein uS9 (129 aa).

Belongs to the universal ribosomal protein uS9 family.

The polypeptide is Small ribosomal subunit protein uS9 (rpsI) (Treponema pallidum (strain Nichols)).